Consider the following 701-residue polypeptide: Sulfate anion transporter 1 (701 aa).

Residues 1–20 form a disordered region; sequence MDESPEPLQQGRGPVPVRRQ. The next 2 membrane-spanning stretches (helical) occupy residues 68–90 and 94–116; these read YLAG…AIAY and AGLQ…FLMG. N-linked (GlcNAc...) asparagine glycosylation is found at N158 and N163. The next 7 membrane-spanning stretches (helical) occupy residues 176-198, 255-277, 290-309, 342-364, 377-399, 412-434, and 472-494; these read YAIR…MGVL, GAGQ…LLAA, VPLP…SHFG, ALDA…EMFA, LLAV…SAAL, TQLS…APLF, and LVWA…LAGV. One can recognise an STAS domain in the interval 527–687; sequence EFEGLVPEPG…LSVHDAVQTA (161 aa).

It belongs to the SLC26A/SulP transporter (TC 2.A.53) family. As to expression, expressed most abundantly in the kidney and liver, with lower levels in the pancreas, testis, brain, small intestine, colon, and lung.

The protein localises to the cell membrane. It is found in the basolateral cell membrane. The catalysed reaction is thiosulfate(in) + sulfate(out) = thiosulfate(out) + sulfate(in). It carries out the reaction 2 hydrogencarbonate(out) + sulfate(in) = 2 hydrogencarbonate(in) + sulfate(out). The enzyme catalyses oxalate(in) + sulfate(out) = oxalate(out) + sulfate(in). It catalyses the reaction oxalate(in) + 2 hydrogencarbonate(out) = oxalate(out) + 2 hydrogencarbonate(in). Its function is as follows. Sodium-independent sulfate anion transporter. Can transport other anions including bicarbonate, thiosulfate and oxalate by mediating sulfate-thiosulfate, sulfate-hydrogencarbonate and sulfate-oxalate anion exchange. Mediates oxalate-hydrogencarbonate anion exchange. The sequence is that of Sulfate anion transporter 1 (SLC26A1) from Homo sapiens (Human).